We begin with the raw amino-acid sequence, 359 residues long: MPSISKTKSGERYRAPTDQARKMDRKKENKRNKKDRQQIRQAMAKYCNLDETTSKLLALERQILGLDPQPFHIDVLRKKQKVLTDSINKRRMTLQQGKEDAELKKFNDKINAYQSDCQKLAVLAQQARLAREADPDMIPLPMGDVSTAGPERNNQLLAPAMIKRKVEFQLPPRPVRVAGQKPPGPPCGLAPNFSDSEEEEEEVHDDHYDDIDLAPVPIPEFDNPYQPIHRNYGPPSSYNSMPTRMPHHHHHHHPHASSHYNPMGFQNHHEEAVISSAPQINRSNEPAAPATLSAAPELRNLRRETVKLVPAQLLRRPGDNKTIVPRQAAPVQRRPEVQKQAKNTDEAYNDFMKELDGLI.

Disordered regions lie at residues 1–38, 235–264, and 317–341; these read MPSI…DRQQ, PSSY…NPMG, and PGDN…QKQA. Residues 8–27 show a composition bias toward basic and acidic residues; the sequence is KSGERYRAPTDQARKMDRKK. The segment covering 245-256 has biased composition (basic residues); sequence MPHHHHHHHPHA.

In terms of biological role, activates pre-mRNA splicing. May inhibit PP1 phosphatase activity. The chain is WW domain-binding protein wbp-11 from Caenorhabditis elegans.